The sequence spans 173 residues: MKSNKFSNKNKINEMITAKKVKLVDQDSVMVGVVDIEEALSRARSVNLDLVEIVHDDEYPLCKIFDYSKYRYSHKKKISDSKKKQKTIIVKELKFKLNIGDNDYNVKLNMIRGFIERGDKVKISLKFIGREILHPEVGMEIIERLIKDTSDIAKPENLPKREGNLINMILTTK.

It belongs to the IF-3 family. Monomer.

It is found in the cytoplasm. In terms of biological role, IF-3 binds to the 30S ribosomal subunit and shifts the equilibrium between 70S ribosomes and their 50S and 30S subunits in favor of the free subunits, thus enhancing the availability of 30S subunits on which protein synthesis initiation begins. This Ehrlichia ruminantium (strain Gardel) protein is Translation initiation factor IF-3.